A 502-amino-acid chain; its full sequence is MDYDFKAKLAAERERVEDLFEYEGCKVGRGTYGHVYKARRKDGKDEKEYALKQIEGTGISMSACREIALLRELKHPNVIALQKVFLSHSDRKVWLLFDYAEHDLWHIIKFHRASKANKKPMQLPRSMVKSLLYQILDGIHYLHANWVLHRDLKPANILVMGEGPERGRVKIADMGFARLFNSPLKPLADLDPVVVTFWYRAPELLLGARHYTKAIDIWAIGCIFAELLTSEPIFHCRQEDIKTSNPFHHDQLDRIFSVMGFPADKDWEDIRKMPEYPTLQKDFRRTTYANSSLIKYMEKHKVKPDSKVFLLLQKLLTMDPTKRITSEQALQDPYFQEDPLPTLDVFAGCQIPYPKREFLNEDDPEEKGDKNQQQQQNQHQQPTAPPQQAAAPPQAPPPQQNSTQTNGTAGGAGAGVGGTGAGLQHSQDSSLNQVPPNKKPRLGPSGANSGGPVMPSDYQHSSSRLNYQSSVQGSSQSQSTLGYSSSSQQSSQYHPSHQAHRY.

Methionine 1 bears the N-acetylmethionine mark. Residues 21–335 (EYEGCKVGRG…SEQALQDPYF (315 aa)) form the Protein kinase domain. ATP is bound by residues 27–35 (VGRGTYGHV) and lysine 52. The Proton acceptor role is filled by aspartate 151. Residues 359–502 (LNEDDPEEKG…YHPSHQAHRY (144 aa)) form a disordered region. The span at 371–392 (NQQQQQNQHQQPTAPPQQAAAP) shows a compositional bias: low complexity. The span at 408 to 421 (TAGGAGAGVGGTGA) shows a compositional bias: gly residues. Over residues 424 to 435 (QHSQDSSLNQVP) the composition is skewed to polar residues. Serine 449 carries the post-translational modification Phosphoserine. Over residues 458 to 467 (YQHSSSRLNY) the composition is skewed to polar residues. A compositionally biased stretch (low complexity) spans 468–496 (QSSVQGSSQSQSTLGYSSSSQQSSQYHPS).

It belongs to the protein kinase superfamily. CMGC Ser/Thr protein kinase family. CDC2/CDKX subfamily.

It is found in the cytoplasm. It localises to the perinuclear region. Its subcellular location is the nucleus. The catalysed reaction is L-seryl-[protein] + ATP = O-phospho-L-seryl-[protein] + ADP + H(+). It catalyses the reaction L-threonyl-[protein] + ATP = O-phospho-L-threonyl-[protein] + ADP + H(+). In Homo sapiens (Human), this protein is Cyclin-dependent kinase 19 (CDK19).